A 145-amino-acid polypeptide reads, in one-letter code: Protein SprT-like (145 aa).

One can recognise a SprT-like domain in the interval 4-140 (TNYVQEVSLA…VCGNCHGKLM (137 aa)). Histidine 64 is a Zn(2+) binding site. Glutamate 65 is a catalytic residue. Histidine 68 is a Zn(2+) binding site.

Belongs to the SprT family. It depends on Zn(2+) as a cofactor.

It localises to the cytoplasm. This Streptococcus pyogenes serotype M3 (strain SSI-1) protein is Protein SprT-like.